Reading from the N-terminus, the 157-residue chain is Protein Smg (157 aa).

This sequence belongs to the Smg family.

The sequence is that of Protein Smg from Salmonella agona (strain SL483).